Here is a 346-residue protein sequence, read N- to C-terminus: Holliday junction branch migration complex subunit RuvB (346 aa).

Positions 1–182 (MSERLVTSNE…LGVLCSMEYY (182 aa)) are large ATPase domain (RuvB-L). Residues Leu21, Arg22, Gly63, Lys66, Thr67, Thr68, 129–131 (EDY), Arg172, Tyr182, and Arg219 each bind ATP. Thr67 contributes to the Mg(2+) binding site. The tract at residues 183–253 (TDEQLKEIII…AAKKSLEILE (71 aa)) is small ATPAse domain (RuvB-S). Positions 256-346 (GEGFDRIDNK…DSKQCTLFEK (91 aa)) are head domain (RuvB-H). 2 residues coordinate DNA: Arg311 and Arg316.

It belongs to the RuvB family. In terms of assembly, homohexamer. Forms an RuvA(8)-RuvB(12)-Holliday junction (HJ) complex. HJ DNA is sandwiched between 2 RuvA tetramers; dsDNA enters through RuvA and exits via RuvB. An RuvB hexamer assembles on each DNA strand where it exits the tetramer. Each RuvB hexamer is contacted by two RuvA subunits (via domain III) on 2 adjacent RuvB subunits; this complex drives branch migration. In the full resolvosome a probable DNA-RuvA(4)-RuvB(12)-RuvC(2) complex forms which resolves the HJ.

Its subcellular location is the cytoplasm. The catalysed reaction is ATP + H2O = ADP + phosphate + H(+). In terms of biological role, the RuvA-RuvB-RuvC complex processes Holliday junction (HJ) DNA during genetic recombination and DNA repair, while the RuvA-RuvB complex plays an important role in the rescue of blocked DNA replication forks via replication fork reversal (RFR). RuvA specifically binds to HJ cruciform DNA, conferring on it an open structure. The RuvB hexamer acts as an ATP-dependent pump, pulling dsDNA into and through the RuvAB complex. RuvB forms 2 homohexamers on either side of HJ DNA bound by 1 or 2 RuvA tetramers; 4 subunits per hexamer contact DNA at a time. Coordinated motions by a converter formed by DNA-disengaged RuvB subunits stimulates ATP hydrolysis and nucleotide exchange. Immobilization of the converter enables RuvB to convert the ATP-contained energy into a lever motion, pulling 2 nucleotides of DNA out of the RuvA tetramer per ATP hydrolyzed, thus driving DNA branch migration. The RuvB motors rotate together with the DNA substrate, which together with the progressing nucleotide cycle form the mechanistic basis for DNA recombination by continuous HJ branch migration. Branch migration allows RuvC to scan DNA until it finds its consensus sequence, where it cleaves and resolves cruciform DNA. In Clostridium perfringens (strain 13 / Type A), this protein is Holliday junction branch migration complex subunit RuvB.